The following is a 263-amino-acid chain: Aquaglyceroporin (263 aa).

Positions methionine 1–arginine 22 are disordered. 6 helical membrane passes run lysine 41–alanine 61, glycine 64–phenylalanine 84, leucine 113–isoleucine 133, valine 157–methionine 177, leucine 180–methionine 200, and valine 222–glycine 242.

The protein belongs to the MIP/aquaporin (TC 1.A.8) family. As to quaternary structure, multimer.

It is found in the vacuole membrane. It carries out the reaction H2O(in) = H2O(out). The catalysed reaction is glycerol(in) = glycerol(out). It catalyses the reaction urea(in) = urea(out). In terms of biological role, mediates water and glycerol transport across cell membranes. Permeable to selected sugar alcohols of up to five carbons and urea. Permeable to methylamine/methylammonium. The chain is Aquaglyceroporin from Toxoplasma gondii (strain ATCC 50611 / Me49).